The chain runs to 294 residues: Probable 2-(5''-triphosphoribosyl)-3'-dephosphocoenzyme-A synthase (294 aa).

Belongs to the CitG/MdcB family.

It catalyses the reaction 3'-dephospho-CoA + ATP = 2'-(5''-triphospho-alpha-D-ribosyl)-3'-dephospho-CoA + adenine. This is Probable 2-(5''-triphosphoribosyl)-3'-dephosphocoenzyme-A synthase from Streptococcus equi subsp. zooepidemicus (strain MGCS10565).